Here is a 440-residue protein sequence, read N- to C-terminus: GTPase Obg (440 aa).

An Obg domain is found at 5-163; that stretch reads STFVDQTKIE…RTLRLELKVL (159 aa). Residues 164 to 338 enclose the OBG-type G domain; that stretch reads ADVGLVGFPS…LMSRAADLVS (175 aa). GTP is bound by residues 170-177, 195-199, 217-220, 288-291, and 319-321; these read GFPSVGKS, FTTLK, DLPG, SQMD, and SSV. Mg(2+) contacts are provided by Ser-177 and Thr-197. Residues 362-440 enclose the OCT domain; it reads YHRPEKMEFT…IGDFSFEFVQ (79 aa).

The protein belongs to the TRAFAC class OBG-HflX-like GTPase superfamily. OBG GTPase family. In terms of assembly, monomer. Mg(2+) serves as cofactor.

The protein resides in the cytoplasm. Functionally, an essential GTPase which binds GTP, GDP and possibly (p)ppGpp with moderate affinity, with high nucleotide exchange rates and a fairly low GTP hydrolysis rate. Plays a role in control of the cell cycle, stress response, ribosome biogenesis and in those bacteria that undergo differentiation, in morphogenesis control. The polypeptide is GTPase Obg (Lactobacillus delbrueckii subsp. bulgaricus (strain ATCC BAA-365 / Lb-18)).